The chain runs to 130 residues: uncharacterized protein (130 aa).

Asn102 carries an N-linked (GlcNAc...) asparagine glycan. A helical transmembrane segment spans residues 110–130; sequence DPLAFYLMFLIIITILLIMIL.

The protein resides in the membrane. This is an uncharacterized protein from Dictyostelium discoideum (Social amoeba).